The following is a 60-amino-acid chain: Large ribosomal subunit protein bL32 (60 aa).

Belongs to the bacterial ribosomal protein bL32 family.

The chain is Large ribosomal subunit protein bL32 from Ehrlichia ruminantium (strain Gardel).